A 597-amino-acid chain; its full sequence is Alpha-1,2-mannosyltransferase MNN2 (597 aa).

The Cytoplasmic portion of the chain corresponds to 1-12 (MLLTKRFSKLFK). A helical; Signal-anchor for type II membrane protein membrane pass occupies residues 13 to 28 (LTFIVLILCGLFVITN). Over 29–597 (KYMDENTSVK…STHDKAIAGK (569 aa)) the chain is Extracellular. 3 N-linked (GlcNAc...) asparagine glycosylation sites follow: asparagine 34, asparagine 363, and asparagine 473.

Belongs to the MNN1/MNT family. As to quaternary structure, interacts with SVP26.

It is found in the golgi apparatus membrane. The protein operates within protein modification; protein glycosylation. Functionally, alpha-1,2-mannosyltransferase, responsible for addition of the first alpha-1,2-linked mannose to form the branches on the mannan backbone of oligosaccharides. This chain is Alpha-1,2-mannosyltransferase MNN2 (MNN2), found in Saccharomyces cerevisiae (strain ATCC 204508 / S288c) (Baker's yeast).